Here is a 1084-residue protein sequence, read N- to C-terminus: Transcription elongation factor SPT5 (1084 aa).

The interval 1–91 is disordered; that stretch reads MSDSEDSDFS…DDEYEDEDPW (91 aa). Acidic residues-rich tracts occupy residues 20–32, 41–62, and 77–91; these read AEEV…EEEQ, AEEE…EEDD, and DEAD…EDPW. The tract at residues 175 to 269 is interaction with SUPT4H1; it reads DPNLWTVKCK…TDVLKVVKEV (95 aa). 4 consecutive KOW domains span residues 272-305, 419-450, 471-502, and 593-626; these read LKPK…ISLK, LQAG…ITIM, FRMG…VILF, and IHVK…LHCK. Positions 312 to 419 are interaction with RNA polymerase II; the sequence is LDRIKARMSM…TTGKEREHNL (108 aa). Serine 665 is modified (phosphoserine). Positions 667-700 are disordered; it reads RISSPMHPGGGGQPQRGGGGGGGGGMGRGRGRRD. The segment covering 674–694 has biased composition (gly residues); that stretch reads PGGGGQPQRGGGGGGGGGMGR. The KOW 5 domain maps to 702–735; sequence DLIGQTVRISQGPYKGYIGVVKDATESTARVELH. Residues 748–973 are disordered; it reads LTTVGGKERQ…HTPGSNIDQA (226 aa). The stretch at 758–763 is one CTR1-1; approximate repeat; sequence GRSSTH. The segment at 758-815 is 8 X 7 AA approximate tandem repeats of G-S-[QR]-T-P-X-[YQ], motif CTR1; sequence GRSSTHLRTPMYGSQTPIYGTGSRTPMYGSQTPLHDGSRTPHYGSQTPLHDGSRTPGQ. Positions 759 to 790 are enriched in polar residues; it reads RSSTHLRTPMYGSQTPIYGTGSRTPMYGSQTP. The stretch at 764 to 769 is one CTR1-2; approximate repeat; that stretch reads LRTPMY. One copy of the CTR1-3 repeat lies at 770–776; that stretch reads GSQTPIY. A phosphothreonine; by CDK9 mark is found at threonine 773 and threonine 782. A CTR1-4 repeat occupies 779 to 785; the sequence is GSRTPMY. The stretch at 786–792 is one CTR1-5 repeat; that stretch reads GSQTPLH. Residues 794–800 form a CTR1-6 repeat; the sequence is GSRTPHY. One copy of the CTR1-7 repeat lies at 801 to 807; sequence GSQTPLH. Residues 809–815 form a CTR1-8 repeat; that stretch reads GSRTPGQ. The span at 832-842 shows a compositional bias: acidic residues; sequence DEYEFAYDDEP. The CTR2-1 repeat unit spans residues 842–849; the sequence is PSPSPQGY. A 10 X 8 AA approximate tandem repeats of P-[TS]-P-S-P-[QA]-[SG]-Y, motif CTR2 region spans residues 842–948; that stretch reads PSPSPQGYGG…ASPSPSPVGY (107 aa). A CTR2-2; approximate repeat occupies 852-860; the sequence is TPNPQTPGY. The segment covering 855–864 has biased composition (pro residues); sequence PQTPGYPEVP. The stretch at 861-867 is one CTR2-3; approximate repeat; the sequence is PEVPSPQ. Polar residues predominate over residues 866–888; the sequence is PQVNPQYNPQTPGTPAMYNTDQY. The CTR2-4; half-length repeat unit spans residues 879 to 883; the sequence is TPAMY. The stretch at 894–900 is one CTR2-5; approximate repeat; sequence PSPQGSY. The span at 894 to 909 shows a compositional bias: low complexity; it reads PSPQGSYQPSPSPQSY. Residues 902–909 form a CTR2-6 repeat; the sequence is PSPSPQSY. A CTR2-7; approximate repeat occupies 914 to 919; it reads PSPVGY. The stretch at 922 to 928 is one CTR2-8 repeat; it reads THSPASY. The stretch at 930-937 is one CTR2-9 repeat; it reads PTPSPMAY. The stretch at 941-948 is one CTR2-10 repeat; that stretch reads PSPSPVGY.

It belongs to the SPT5 family. In terms of assembly, interacts with SUPT4H1 to form the DSIF complex. DSIF interacts with RNA polymerase II and with the positive transcription elongation factor b complex (P-TEFb complex), which is composed of CDK9 and cyclin-T. Phosphorylated. Phosphorylation by P-TEFb (CDK9) at Thr residues of the C-terminal repeats alleviates transcriptional pausing and promotes transcription elongation.

It localises to the nucleus. Its function is as follows. Component of the DRB sensitivity-inducing factor complex (DSIF complex), which regulates mRNA processing and transcription elongation by RNA polymerase II. DSIF positively regulates mRNA capping by stimulating the mRNA guanylyltransferase activity of RNGTT/CAP1A. DSIF also acts cooperatively with the negative elongation factor complex (NELF complex) to enhance transcriptional pausing at sites proximal to the promoter. Transcriptional pausing may facilitate the assembly of an elongation competent RNA polymerase II complex. DSIF and NELF promote pausing by inhibition of the transcription elongation factor TFIIS/S-II. TFIIS/S-II binds to RNA polymerase II at transcription pause sites and stimulates the weak intrinsic nuclease activity of the enzyme. Cleavage of blocked transcripts by RNA polymerase II promotes the resumption of transcription from the new 3' terminus and may allow repeated attempts at transcription through natural pause sites. Following phosphorylation by CDK9, DSIF can also positively regulate transcriptional elongation. Regulation of transcriptional elongation by this protein is required for the expression of genes which control neuronal development. The sequence is that of Transcription elongation factor SPT5 (supt5h) from Danio rerio (Zebrafish).